A 245-amino-acid polypeptide reads, in one-letter code: MKDIIVIKIGGVASQQLSGDFLSQIKNWQDAGKQLVIVHGGGFAINKLMEENQVPVKKINGLRVTSKDDMVLVSHALLDLVGKNLQEKLRQAGVSCQQLKSDIKHVVAADYLDKDTYGYVGDVTHINKRVIEEFLENRQIPILASLGYSKEGDMLNINADYLATAVAVALAADKLILMTNVKGVLENGAVLEKITSHQVQEKIDTAVITAGMIPKIESAAKTVAAGVGQVLIGDNLLTGTLITAD.

Residues 41-42 (GG), Arg63, and Asn156 each bind substrate.

Belongs to the acetylglutamate kinase family. ArgB subfamily.

The protein localises to the cytoplasm. The catalysed reaction is N-acetyl-L-glutamate + ATP = N-acetyl-L-glutamyl 5-phosphate + ADP. The protein operates within amino-acid biosynthesis; L-arginine biosynthesis; N(2)-acetyl-L-ornithine from L-glutamate: step 2/4. Its function is as follows. Catalyzes the ATP-dependent phosphorylation of N-acetyl-L-glutamate. The protein is Acetylglutamate kinase of Streptococcus mutans serotype c (strain ATCC 700610 / UA159).